We begin with the raw amino-acid sequence, 409 residues long: Phospho-N-acetylmuramoyl-pentapeptide-transferase (409 aa).

Transmembrane regions (helical) follow at residues 23–43, 73–93, 95–115, 132–152, 214–234, 247–267, 279–299, 305–325, 331–351, and 386–406; these read YITF…TIFG, TPTM…LLLA, LNNI…AIGF, GIFK…TLYF, YAWL…SNGA, TSAI…NVIF, SGEM…FLWY, AVFM…VLAI, MLIP…VLQV, and KIVT…IVTL.

It belongs to the glycosyltransferase 4 family. MraY subfamily. Mg(2+) serves as cofactor.

The protein resides in the cell inner membrane. The enzyme catalyses UDP-N-acetyl-alpha-D-muramoyl-L-alanyl-gamma-D-glutamyl-meso-2,6-diaminopimeloyl-D-alanyl-D-alanine + di-trans,octa-cis-undecaprenyl phosphate = di-trans,octa-cis-undecaprenyl diphospho-N-acetyl-alpha-D-muramoyl-L-alanyl-D-glutamyl-meso-2,6-diaminopimeloyl-D-alanyl-D-alanine + UMP. Its pathway is cell wall biogenesis; peptidoglycan biosynthesis. Its function is as follows. Catalyzes the initial step of the lipid cycle reactions in the biosynthesis of the cell wall peptidoglycan: transfers peptidoglycan precursor phospho-MurNAc-pentapeptide from UDP-MurNAc-pentapeptide onto the lipid carrier undecaprenyl phosphate, yielding undecaprenyl-pyrophosphoryl-MurNAc-pentapeptide, known as lipid I. This chain is Phospho-N-acetylmuramoyl-pentapeptide-transferase, found in Flavobacterium psychrophilum (strain ATCC 49511 / DSM 21280 / CIP 103535 / JIP02/86).